A 320-amino-acid polypeptide reads, in one-letter code: tRNA N6-adenosine threonylcarbamoyltransferase (320 aa).

Positions 114 and 118 each coordinate Fe cation. Substrate is bound by residues 136–140 (VVSGG), D169, G182, D186, and N273. D297 serves as a coordination point for Fe cation.

It belongs to the KAE1 / TsaD family. The cofactor is Fe(2+).

The protein resides in the cytoplasm. It catalyses the reaction L-threonylcarbamoyladenylate + adenosine(37) in tRNA = N(6)-L-threonylcarbamoyladenosine(37) in tRNA + AMP + H(+). Functionally, required for the formation of a threonylcarbamoyl group on adenosine at position 37 (t(6)A37) in tRNAs that read codons beginning with adenine. Is involved in the transfer of the threonylcarbamoyl moiety of threonylcarbamoyl-AMP (TC-AMP) to the N6 group of A37, together with TsaE and TsaB. TsaD likely plays a direct catalytic role in this reaction. This chain is tRNA N6-adenosine threonylcarbamoyltransferase, found in Ureaplasma urealyticum serovar 10 (strain ATCC 33699 / Western).